The primary structure comprises 192 residues: uncharacterized protein (192 aa).

The protein localises to the virion. This is an uncharacterized protein from Acanthamoeba polyphaga mimivirus (APMV).